A 541-amino-acid polypeptide reads, in one-letter code: Metal transporter Nramp6 (541 aa).

Residues 1–18 (MAPLPAAATATASSAATP) show a composition bias toward low complexity. The tract at residues 1 to 44 (MAPLPAAATATASSAATPADDEAHSLLPSTPSNEEDDDDLEERA) is disordered. The next 12 membrane-spanning stretches (helical) occupy residues 87 to 107 (LWLF…PGNL), 120 to 140 (TLLW…LLAA), 172 to 192 (VAMV…IKIL), 196 to 216 (FLPL…FLSL), 224 to 244 (LEAV…WMFT), 270 to 290 (AVGV…SALV), 316 to 336 (IALA…AKGF), 358 to 378 (FGGG…AAGQ), 404 to 424 (IRSL…ALFF), 436 to 456 (WLNV…ITLV), 474 to 494 (VTWT…LDFF), and 502 to 522 (LSGS…LYLI).

Belongs to the NRAMP (TC 2.A.55) family.

Its subcellular location is the membrane. In terms of biological role, probable metal transporter. This chain is Metal transporter Nramp6 (NRAMP6), found in Oryza sativa subsp. japonica (Rice).